The following is a 280-amino-acid chain: uncharacterized protein (280 aa).

The Proton donor role is filled by Tyr-54. His-116 contributes to the substrate binding site. Ser-194–Asn-246 lines the NADP(+) pocket.

The protein belongs to the aldo/keto reductase family.

This is an uncharacterized protein from Bacillus subtilis (strain 168).